A 170-amino-acid polypeptide reads, in one-letter code: Large ribosomal subunit protein uL11 (170 aa).

Belongs to the universal ribosomal protein uL11 family. Part of the ribosomal stalk of the 50S ribosomal subunit. Interacts with L10 and the large rRNA to form the base of the stalk. L10 forms an elongated spine to which L12 dimers bind in a sequential fashion forming a multimeric L10(L12)X complex.

Functionally, forms part of the ribosomal stalk which helps the ribosome interact with GTP-bound translation factors. The protein is Large ribosomal subunit protein uL11 of Desulfurococcus amylolyticus (strain DSM 18924 / JCM 16383 / VKM B-2413 / 1221n) (Desulfurococcus kamchatkensis).